Consider the following 584-residue polypeptide: MKSTFEAAGRVAKGMLKDPSKKYKPFKGIQLPNRQWPNKVLTKAPRWLSTDLRDGNQALPDPMNGQEKLRYFKLLCSIGFKEIEVGFPSASQTDFAFVRHLIETPGLIPDDVTISALTPSREPLILRTIEALRGAKNATVHLYNACSPLFREVVFRNSKQETLDLAIKGSKIVTAATKNALESKETNWGFEYSPETFSDTEPDFALEVCEAVKGMWKPSAAQPIIFNLPATVEMSTPNTYADLIEYFSTNISEREKVCVSLHPHNDRGTAVAAAELGQLAGGDRIEGCLFGNGERTGNVDLVTLAFNLYTQGVSPNLDFSKLDEIIRITEDCNKINVHPRHPYAGNLVFTAFSGSHQDAISKGLKAYDERKAVDPVWKVPYLPLDPHDVNSEYAAIIRVNSQSGKGGVAYLLKTNCGLDLPRALQVEFGSIVKDYSDTKGKELSIGEISDLFYTTYYLEFPGRFSVNDYTLSSNGPQSKCIKCVVDIKGEKKDTPSRVVIEGVGNGPLSALVDALRRQFNISFDIGQYSEHAIGSGNGVKAASYVEIIFNNTSFWGVGIDADVTSAGLKAVMSGVSRASRAFAK.

One can recognise a Pyruvate carboxyltransferase domain in the interval 45–323; the sequence is PRWLSTDLRD…SPNLDFSKLD (279 aa). Residues D54, H262, H264, and N298 each coordinate a divalent metal cation.

Belongs to the alpha-IPM synthase/homocitrate synthase family. LeuA type 2 subfamily. As to quaternary structure, homodimer. A divalent metal cation is required as a cofactor.

It catalyses the reaction 3-methyl-2-oxobutanoate + acetyl-CoA + H2O = (2S)-2-isopropylmalate + CoA + H(+). The protein operates within amino-acid biosynthesis; L-leucine biosynthesis; L-leucine from 3-methyl-2-oxobutanoate: step 1/4. Functionally, catalyzes the condensation of the acetyl group of acetyl-CoA with 3-methyl-2-oxobutanoate (2-oxoisovalerate) to form 3-carboxy-3-hydroxy-4-methylpentanoate (2-isopropylmalate). The sequence is that of 2-isopropylmalate synthase (leu3) from Schizosaccharomyces pombe (strain 972 / ATCC 24843) (Fission yeast).